Consider the following 270-residue polypeptide: Formamidopyrimidine-DNA glycosylase (270 aa).

The active-site Schiff-base intermediate with DNA is P2. The Proton donor role is filled by E3. The Proton donor; for beta-elimination activity role is filled by K58. Positions 91, 110, and 151 each coordinate DNA. The FPG-type zinc-finger motif lies at 236–270 (FVYGRGGEACKVCGTELRNVVLGQRASVFCPRCQR). R260 acts as the Proton donor; for delta-elimination activity in catalysis.

This sequence belongs to the FPG family. In terms of assembly, monomer. Zn(2+) serves as cofactor.

The catalysed reaction is Hydrolysis of DNA containing ring-opened 7-methylguanine residues, releasing 2,6-diamino-4-hydroxy-5-(N-methyl)formamidopyrimidine.. The enzyme catalyses 2'-deoxyribonucleotide-(2'-deoxyribose 5'-phosphate)-2'-deoxyribonucleotide-DNA = a 3'-end 2'-deoxyribonucleotide-(2,3-dehydro-2,3-deoxyribose 5'-phosphate)-DNA + a 5'-end 5'-phospho-2'-deoxyribonucleoside-DNA + H(+). Functionally, involved in base excision repair of DNA damaged by oxidation or by mutagenic agents. Acts as a DNA glycosylase that recognizes and removes damaged bases. Has a preference for oxidized purines, such as 7,8-dihydro-8-oxoguanine (8-oxoG). Has AP (apurinic/apyrimidinic) lyase activity and introduces nicks in the DNA strand. Cleaves the DNA backbone by beta-delta elimination to generate a single-strand break at the site of the removed base with both 3'- and 5'-phosphates. The sequence is that of Formamidopyrimidine-DNA glycosylase from Pseudomonas fluorescens (strain SBW25).